The chain runs to 1165 residues: Leptin receptor (1165 aa).

A signal peptide spans 1–21 (MTCPKFSVALLHWEFIYVITA). The Extracellular segment spans residues 22-838 (FDLAYPITPW…TQDGEKHRND (817 aa)). 5 disulfide bridges follow: C37–C90, C89–C99, C131–C142, C186–C196, and C188–C193. N-linked (GlcNAc...) asparagine glycosylation is found at N41, N55, N72, N80, and N98. N-linked (GlcNAc...) asparagine glycosylation occurs at N187. N-linked (GlcNAc...) asparagine glycosylation is found at N206, N276, N347, and N397. Residues 239–332 (PPLGLHMEIT…STPFTFTTQD (94 aa)) enclose the Fibronectin type-III 1 domain. 2 disulfide bridges follow: C352–C412 and C413–C418. An N-linked (GlcNAc...) asparagine glycan is attached at N433. 3 disulfide bridges follow: C436-C447, C473-C528, and C488-C498. The tract at residues 467–484 (HRSSLYCSDVPSVHPISE) is leptin-binding. 3 consecutive Fibronectin type-III domains span residues 539–634 (PPSS…TVVT), 642–736 (GPEF…WPMS), and 740–834 (IVQS…DGEK). Positions 622–626 (WSNWS) match the WSXWS motif motif. N-linked (GlcNAc...) asparagine glycans are attached at residues N624, N659, N670, N697, N728, and N750. Residues 839–861 (AGLYVIVPIIISSSILLLGTLLM) form a helical membrane-spanning segment. Residues 862 to 1165 (SHQRMKKLFW…MENKMYDLTV (304 aa)) lie on the Cytoplasmic side of the membrane. A Box 1 motif motif is present at residues 870–878 (FWEDVPNPK). S881 is subject to Phosphoserine. The required for JAK2 activation stretch occupies residues 892-897 (ETFEHL). The tract at residues 897–905 (LFIKHTESV) is required for STAT3 phosphorylation. Phosphotyrosine; by JAK2 is present on Y986. Y1079 bears the Phosphotyrosine mark. Y1141 carries the post-translational modification Phosphotyrosine; by JAK2.

Belongs to the type I cytokine receptor family. Type 2 subfamily. Present as a mixture of monomers and dimers. The phosphorylated receptor binds a number of SH2 domain-containing proteins such as JAK2, STAT3, PTPN11, and SOCS3. Interaction with SOCS3 inhibits JAK/STAT signaling and MAPK cascade. In terms of processing, on ligand binding, phosphorylated on two conserved C-terminal tyrosine residues by JAK2. Tyr-986 is required for complete binding and activation of PTPN11, ERK/FOS activation,for interaction with SOCS3 and SOCS3 mediated inhibition of leptin signaling. Phosphorylation on Tyr-1141 is required for STAT3 binding/activation. Phosphorylation of Tyr-1079 has a more accessory role. In terms of tissue distribution, kidney, liver, spleen, lung, brain, testis, uterus, ovary, corpus luteum, theca and granulosa cells.

It localises to the cell membrane. Its subcellular location is the basolateral cell membrane. Its function is as follows. Receptor for hormone LEP/leptin. On ligand binding, mediates LEP central and peripheral effects through the activation of different signaling pathways such as JAK2/STAT3 and MAPK cascade/FOS. In the hypothalamus, LEP acts as an appetite-regulating factor that induces a decrease in food intake and an increase in energy consumption by inducing anorexinogenic factors and suppressing orexigenic neuropeptides, also regulates bone mass and secretion of hypothalamo-pituitary-adrenal hormones. In the periphery, increases basal metabolism, influences reproductive function, regulates pancreatic beta-cell function and insulin secretion, is pro-angiogenic and affects innate and adaptive immunity. Control of energy homeostasis and melanocortin production (stimulation of POMC and full repression of AgRP transcription) is mediated by STAT3 signaling, whereas distinct signals regulate NPY and the control of fertility, growth and glucose homeostasis. Involved in the regulation of counter-regulatory response to hypoglycemia by inhibiting neurons of the parabrachial nucleus. Has a specific effect on T lymphocyte responses, differentially regulating the proliferation of naive and memory T-cells. Leptin increases Th1 and suppresses Th2 cytokine production. This is Leptin receptor (LEPR) from Sus scrofa (Pig).